The primary structure comprises 62 residues: Probable tautomerase RSc0807 (62 aa).

Residue proline 2 is the Proton acceptor; via imino nitrogen of the active site.

This sequence belongs to the 4-oxalocrotonate tautomerase family.

The chain is Probable tautomerase RSc0807 from Ralstonia nicotianae (strain ATCC BAA-1114 / GMI1000) (Ralstonia solanacearum).